Reading from the N-terminus, the 471-residue chain is Putative multidrug resistance protein MdtD (471 aa).

The Periplasmic portion of the chain corresponds to 1-11 (MTELPDSTRWQ). The chain crosses the membrane as a helical span at residues 12-32 (LWIVAFGFFMQSLDTTIVNTA). At 33–48 (LPSMAQSLGESPLHMH) the chain is on the cytoplasmic side. The helical transmembrane segment at 49 to 69 (MVIVSYVLTVAVMLPASGWLA) threads the bilayer. Residues 70-76 (DKVGVRN) lie on the Periplasmic side of the membrane. A helical membrane pass occupies residues 77–97 (IFFTAIVLFTLGSLFCALSGT). The Cytoplasmic portion of the chain corresponds to 98 to 101 (LNEL). A helical transmembrane segment spans residues 102-124 (LLARALQGVGGAMMVPVGRLTVM). Residues 125–137 (KIVPREQYMAAMT) lie on the Periplasmic side of the membrane. The chain crosses the membrane as a helical span at residues 138-158 (FVTLPGQVGPLLGPALGGLLV). The Cytoplasmic portion of the chain corresponds to 159–164 (EYASWH). A helical transmembrane segment spans residues 165-185 (WIFLINIPVGIIGAIATLLLM). Residues 186 to 196 (PNYTMQTRRFD) lie on the Periplasmic side of the membrane. A helical transmembrane segment spans residues 197–217 (LSGFLLLAVGMAVLTLALDGS). The Cytoplasmic portion of the chain corresponds to 218 to 224 (KGTGLSP). A helical membrane pass occupies residues 225 to 245 (LAIAGLVAVGVVALVLYLLHA). The Periplasmic segment spans residues 246-262 (RNNNRALFSLKLFRTRT). A helical membrane pass occupies residues 263-283 (FSLGLAGSFAGRIGSGMLPFM). Residues 284-285 (TP) are Cytoplasmic-facing. Residues 286–306 (VFLQIGLGFSPFHAGLMMIPM) traverse the membrane as a helical segment. The Periplasmic portion of the chain corresponds to 307-341 (VLGSMGMKRIVVQVVNRFGYRRVLVATTLGLSLIT). A helical membrane pass occupies residues 342-362 (LLFMTTALLGWYYVLPFVLFL). The Cytoplasmic portion of the chain corresponds to 363–395 (QGMVNSTRFSSMNTLTLKDLPDNLASSGNSLLS). Residues 396–416 (MIMQLSMSIGVTIAGLLLGLF) traverse the membrane as a helical segment. At 417–430 (GSQHVSVDSGTTQT) the chain is on the periplasmic side. Residues 431-451 (VFMYTWLSMAFIIALPAFIFA) traverse the membrane as a helical segment. Over 452 to 471 (RVPNDTHQNVAISRRKRSAQ) the chain is Cytoplasmic.

The protein belongs to the major facilitator superfamily. TCR/Tet family.

The protein localises to the cell inner membrane. In Shigella sonnei (strain Ss046), this protein is Putative multidrug resistance protein MdtD.